A 187-amino-acid polypeptide reads, in one-letter code: ATP synthase subunit b, chloroplastic (187 aa).

The chain crosses the membrane as a helical span at residues 29-49 (LAVVLGVLIYLGKGVCAGCIL).

The protein belongs to the ATPase B chain family. In terms of assembly, F-type ATPases have 2 components, F(1) - the catalytic core - and F(0) - the membrane proton channel. F(1) has five subunits: alpha(3), beta(3), gamma(1), delta(1), epsilon(1). F(0) has four main subunits: a(1), b(1), b'(1) and c(10-14). The alpha and beta chains form an alternating ring which encloses part of the gamma chain. F(1) is attached to F(0) by a central stalk formed by the gamma and epsilon chains, while a peripheral stalk is formed by the delta, b and b' chains.

Its subcellular location is the plastid. It is found in the chloroplast thylakoid membrane. Functionally, f(1)F(0) ATP synthase produces ATP from ADP in the presence of a proton or sodium gradient. F-type ATPases consist of two structural domains, F(1) containing the extramembraneous catalytic core and F(0) containing the membrane proton channel, linked together by a central stalk and a peripheral stalk. During catalysis, ATP synthesis in the catalytic domain of F(1) is coupled via a rotary mechanism of the central stalk subunits to proton translocation. Its function is as follows. Component of the F(0) channel, it forms part of the peripheral stalk, linking F(1) to F(0). The sequence is that of ATP synthase subunit b, chloroplastic from Angiopteris evecta (Mule's foot fern).